Consider the following 124-residue polypeptide: Galanin peptides (124 aa).

Residues 1–19 (MARGSVILLGWLLLVVTLS) form the signal peptide. A propeptide spanning residues 20–30 (ATLGLGMPAKE) is cleaved from the precursor. Thr-61 carries the post-translational modification Threonine amide. A phosphoserine mark is found at Ser-117 and Ser-118.

The protein belongs to the galanin family. In terms of tissue distribution, expressed in retinal progenitor cells and retinal ganglion cells (at protein level).

The protein localises to the secreted. Endocrine hormone of the central and peripheral nervous systems that binds and activates the G protein-coupled receptors GALR1, GALR2, and GALR3. This small neuropeptide may regulate diverse physiologic functions including contraction of smooth muscle of the gastrointestinal and genitourinary tract, growth hormone and insulin release and adrenal secretion. The sequence is that of Galanin peptides (Gal) from Mus musculus (Mouse).